The primary structure comprises 97 residues: NADH-ubiquinone oxidoreductase chain 4L (97 aa).

The next 3 membrane-spanning stretches (helical) occupy residues M1–N21, L23–I43, and L60–L80.

This sequence belongs to the complex I subunit 4L family.

The protein resides in the mitochondrion membrane. The catalysed reaction is a ubiquinone + NADH + 5 H(+)(in) = a ubiquinol + NAD(+) + 4 H(+)(out). Its function is as follows. Core subunit of the mitochondrial membrane respiratory chain NADH dehydrogenase (Complex I) that is believed to belong to the minimal assembly required for catalysis. Complex I functions in the transfer of electrons from NADH to the respiratory chain. The immediate electron acceptor for the enzyme is believed to be ubiquinone. The polypeptide is NADH-ubiquinone oxidoreductase chain 4L (ND4L) (Paracentrotus lividus (Common sea urchin)).